A 379-amino-acid chain; its full sequence is Homoserine O-acetyltransferase (379 aa).

Residues 54–332 form the AB hydrolase-1 domain; the sequence is NAILVCHALS…PYQSEEIVKS (279 aa). The active-site Nucleophile is the S159. Position 228 (R228) interacts with substrate. Residues D318 and H352 contribute to the active site. D353 is a substrate binding site.

The protein belongs to the AB hydrolase superfamily. MetX family. In terms of assembly, homodimer.

The protein localises to the cytoplasm. It carries out the reaction L-homoserine + acetyl-CoA = O-acetyl-L-homoserine + CoA. It participates in amino-acid biosynthesis; L-methionine biosynthesis via de novo pathway; O-acetyl-L-homoserine from L-homoserine: step 1/1. Its function is as follows. Transfers an acetyl group from acetyl-CoA to L-homoserine, forming acetyl-L-homoserine. In Leptospira meyeri, this protein is Homoserine O-acetyltransferase.